The following is a 43-amino-acid chain: Omega-agatoxin-Aa3c (43 aa).

3 cysteine pairs are disulfide-bonded: C2–C19, C9–C25, and C27–C38.

This sequence belongs to the neurotoxin 04 (omega-agtx) family. 03 (type II/III omega-agtx) subfamily. As to expression, expressed by the venom gland.

The protein resides in the secreted. Its function is as follows. Omega-agatoxins are antagonists of voltage-gated calcium channels (Cav). The polypeptide is Omega-agatoxin-Aa3c (Agelenopsis aperta (North American funnel-web spider)).